The chain runs to 1597 residues: MAGLRRPQSGAYRRTAAAVNLLLGVFQVLLSCCRPGGAQGQAFEPLPNVVELWQAEEGELLLPTQGDSEEDMEEPSQEQSFSDKLFIGKGLHFQPSVLDFGIQFLGHPAAKLLYAYNPSRESEVVVNSVFTAARHFHVPPVHCRVIPAMGKASFRVIFLPTEEGSIESSLFINTSSHGVFSYHVSGVGTRRVSTEGSAEQLPNAYFLLPQVQSIQLSQTQAETTNTSLLRVQLECSLHNKVCQQLKSCSLGSDDALHLEMNIIVAVENSSKQPEENTQALLDHLSIVYVATDESDTSDESAVNMYVLHSGNSLIWIQDIHHFSQKNVLSLQFEPVLLSTSTTNFTKIASFTCKAGTSCDSGIMGLRKKKASPAMQACLSSPVVQGYFRTDASTAQFHIESHETATGVWSIWYRSHFDQSIVLKDVFVSKETKHILKVLSFRGPLFLPPGCWNIFSLKLAVKGIVLNLFTNVFLTTNTGAIFAIPLQIFSAPTKEGSLGFEVLAHCGMHYFMGKSKTENPNWERSLSLDRSTWDMDSELANKLYERWKKYKSGDACRRNVLGMSQFAFTKKSKETEPFVSFLPRVVPEPNLVLNFSATALRNSAVKYFVVRNPTPQPVSLQLLPLSLYPRPEAAVRLLHKWFGTDMQMVNLSTGEFQLTQACPYQGEPSEESSLGALHVHLQALETRRVGVVFTPADYGKVTSLILIRNNLTVVDMVGVEGFGAQELLKVGGRLPGAGGSLRFKVPESTLMDCHRQLKDSKQILSITKNFKVENIGPLPITVTSLKINGYNCQGYGFEVLDCHPFSLSPNTSRDISIVFTPDFTSSWVIRELTLVTAADLEFHFTLNVTLPHHMLPLCAEVVPGPSWEESFWRLTVFFVSLSLLGVILIAFQQAQYILMEFMKTRQRQNGSSSSQQNGDPVAMISSHPHKSTCKNFLDTYSPSDKGRGKSCLPVGPSLSRLQNAAKRSPATYGHSQKKHKCSFYYSKQKPSASAASSANVTTEEKQTVTLASSLSVAKEDICTNVLSENWVSLRYASGINGSLQKNLTLPKNVLHKEESSLKNTVVTNTPSECSMKEGVHTYMFPKETDSKISENVAELKEQEPCPQKTSKKPPESTLPKTPPQYLQSDLPEVSRKHGNKQQAPVRSEVDSFEPVRAADAEPSSVRKTQGASPEDTCSEKQDTPSAEQEDPSRKRKLQERREGSTQALNWNKTRPCRRNKKRASAQASSSPRPSEQSEQRLVCSDVRSWCAQDGAGEKCKAGTEVSGSSPERREEDSYYQKSEKKCADKFCSDSSSDCGSSSGSVRASRGSWGSWSSSSSDCDRRPVVDIQHFLPPGDGVSPQNFPSEASVPLSLPQHVCSSTDVSVLPEFTESPCPGLPATPAGAGEEKGLYPPGGLWPSQPVCLTSSFNCPVENGAPGVSQEPTSIPDSSFIDWSASCEGQFPSVYCPLELNDYNAFPEENMNYTNGFPCSSKVQTDFIGHSTPSTWNTPASMPAAWGHASLVNSPSYLTSTRSLSPMSGLFGSIWAPQSEVYETCCPISPATEHATHMENQVMCKEYYLGFNPFRAYMNLDIWTSTANRNANFPLSRDSSYCGNM.

The first 40 residues, 1–40 (MAGLRRPQSGAYRRTAAAVNLLLGVFQVLLSCCRPGGAQG), serve as a signal peptide directing secretion. Residues 41–869 (QAFEPLPNVV…VVPGPSWEES (829 aa)) are Extracellular-facing. N-linked (GlcNAc...) asparagine glycans are attached at residues Asn343, Asn593, Asn709, and Asn846. The required for Wnt-signaling inhibition and LRP6 degradation stretch occupies residues 696–916 (DYGKVTSLIL…QNGSSSSQQN (221 aa)). Residues 870 to 890 (FWRLTVFFVSLSLLGVILIAF) form a helical membrane-spanning segment. At 891 to 1597 (QQAQYILMEF…SRDSSYCGNM (707 aa)) the chain is on the cytoplasmic side. Low complexity predominate over residues 907-917 (QNGSSSSQQNG). 3 disordered regions span residues 907–928 (QNGS…SHPH), 1096–1240 (AELK…EQRL), and 1252–1322 (DGAG…SDCD). Residues 1213–1222 (RPCRRNKKRA) are compositionally biased toward basic residues. Positions 1223–1239 (SAQASSSPRPSEQSEQR) are enriched in low complexity. The span at 1269–1290 (PERREEDSYYQKSEKKCADKFC) shows a compositional bias: basic and acidic residues. A compositionally biased stretch (low complexity) spans 1291–1319 (SDSSSDCGSSSGSVRASRGSWGSWSSSSS).

Belongs to the TMEM131 family.

The protein resides in the cell membrane. It localises to the endoplasmic reticulum. The protein localises to the cytoplasm. In its membrane-associated form, antagonizes canonical Wnt signaling by triggering lysosome-dependent degradation of Wnt-activated LRP6. Regulates thymocyte proliferation. This is Transmembrane protein 131-like from Mus musculus (Mouse).